The chain runs to 243 residues: Small ribosomal subunit protein uS3 (243 aa).

Position 2 is an N-acetylalanine (alanine 2). Phosphoserine occurs at positions 6 and 35. The KH type-2 domain maps to 21–92 (LNEFLTRELA…SVELYAEKVA (72 aa)). Threonine 42 is modified (phosphothreonine). N6-acetyllysine is present on lysine 62. Asymmetric dimethylarginine is present on residues arginine 64, arginine 65, and arginine 67. The residue at position 70 (threonine 70) is a Phosphothreonine. Lysine 90 participates in a covalent cross-link: Glycyl lysine isopeptide (Lys-Gly) (interchain with G-Cter in ubiquitin). Phosphoserine is present on serine 104. Lysine 132 is subject to N6-succinyllysine. The tract at residues 200-243 (PKKPLPDHVSIVEPKDEILPTTPISEQKGGKPEPPAMPQPVPTA) is disordered. Lysine 202 participates in a covalent cross-link: Glycyl lysine isopeptide (Lys-Gly) (interchain with G-Cter in ubiquitin). Serine 209 bears the Phosphoserine mark. A Glycyl lysine isopeptide (Lys-Gly) (interchain with G-Cter in SUMO2); alternate cross-link involves residue lysine 214. Lysine 214 is covalently cross-linked (Glycyl lysine isopeptide (Lys-Gly) (interchain with G-Cter in ubiquitin); alternate). A phosphothreonine mark is found at threonine 220 and threonine 221. Phosphoserine is present on serine 224. Lysine 230 is covalently cross-linked (Glycyl lysine isopeptide (Lys-Gly) (interchain with G-Cter in SUMO2)). Residues 231–243 (PEPPAMPQPVPTA) are compositionally biased toward pro residues. Residue threonine 242 is modified to Phosphothreonine.

It belongs to the universal ribosomal protein uS3 family. In terms of assembly, component of the 40S small ribosomal subunit. Identified in a IGF2BP1-dependent mRNP granule complex containing untranslated mRNAs. Interacts with HNRPD. Interacts with PRMT1; the interaction methylates RPS3. Interacts with SUMO1; the interaction sumoylates RPS3. Interacts with UBC9. Interacts with CDK1; the interaction phosphorylates RPS3. Interacts with PRKCD; the interaction phosphorylates RPS3. Interacts with PKB/AKT; the interaction phosphorylates RPS3. Interacts with E2F1; the interaction occurs in the absence of nerve growth factor and increases transcription of pro-apoptotic proteins BCL2L11/BIM and HRK/Dp5. Interacts with the base excision repair proteins APEX1 and OGG1; interaction with OGG1 increases OGG1 N-glycosylase activity. Interacts with UNG; the interaction increases the uracil excision activity of UNG1. Interacts with HSP90; the interaction prevents the ubiquitination and proteasome-dependent degradation of RPS3 and is suppressed by increased ROS levels. Interacts with TOM70; the interaction promotes translocation of RPS3 to the mitochondrion. Interacts (via N-terminus) with RELA (via N-terminus); the interaction enhances the DNA-binding activity of the NF-kappa-B p65-p50 complex. Interacts with NFKBIA; the interaction is direct and may bridge the interaction between RPS3 and RELA. Interacts with IKKB; the interaction phosphorylates RPS3 and enhances its translocation to the nucleus. Interacts (via KH domain) with MDM2 and TP53. Interacts with TRADD. Interacts with ASCC3. Identified in a HCV IRES-mediated translation complex, at least composed of EIF3C, IGF2BP1, RPS3 and HCV RNA-replicon. Interacts with CRY1. Post-translationally, methylation by PRMT1 is required for import into the nucleolus and for ribosome assembly. Sumoylation by SUMO1 enhances protein stability through increased resistance to proteolysis. Sumoylation occurs at one or more of the three consensus sites, Lys-18, Lys-214 and Lys-230. In terms of processing, phosphorylation at Thr-221 by CDK1 occurs mainly in G2/M phase. Phosphorylation by PRKCD occurs on a non-ribosomal-associated form which results in translocation of RPS3 to the nucleus and enhances its endonuclease activity. Phosphorylated on Ser-209 by IKKB in response to activation of the NF-kappa-B p65-p50 complex which enhances the association of RPS3 with importin-alpha and mediates the nuclear translocation of RPS3. Phosphorylation by MAPK is required for translocation to the nucleus following exposure of cells to DNA damaging agents such as hydrogen peroxide. Phosphorylation by PKB/AKT mediates RPS3 nuclear translocation, enhances RPS3 endonuclease activity and suppresses RPS3-induced neuronal apoptosis. Post-translationally, ubiquitinated; ubiquitination is prevented by interaction with HSP90 which stabilizes the protein. Monoubiquitinated at Lys-214 by RNF10 and ZNF598 when a ribosome has stalled during translation of poly(A) sequences, leading to preclude synthesis of a long poly-lysine tail and initiate the ribosome quality control (RQC) pathway to degrade the potentially detrimental aberrant nascent polypeptide. Deubiquitinated at Lys-214 by USP10, preventing degradation by the proteasome and promoting 40S ribosome subunit recycling following ribosome dissociation. Ufmylated by UFL1.

Its subcellular location is the cytoplasm. It is found in the nucleus. The protein localises to the nucleolus. It localises to the mitochondrion inner membrane. The protein resides in the cytoskeleton. Its subcellular location is the spindle. The enzyme catalyses 2'-deoxyribonucleotide-(2'-deoxyribose 5'-phosphate)-2'-deoxyribonucleotide-DNA = a 3'-end 2'-deoxyribonucleotide-(2,3-dehydro-2,3-deoxyribose 5'-phosphate)-DNA + a 5'-end 5'-phospho-2'-deoxyribonucleoside-DNA + H(+). Its activity is regulated as follows. Endonuclease activity is inhibited by MgCl2 on apurinic/apyrimidinic DNA but not on UV-irradiated DNA. Its function is as follows. Component of the small ribosomal subunit. The ribosome is a large ribonucleoprotein complex responsible for the synthesis of proteins in the cell. Has endonuclease activity and plays a role in repair of damaged DNA. Cleaves phosphodiester bonds of DNAs containing altered bases with broad specificity and cleaves supercoiled DNA more efficiently than relaxed DNA. Displays high binding affinity for 7,8-dihydro-8-oxoguanine (8-oxoG), a common DNA lesion caused by reactive oxygen species (ROS). Has also been shown to bind with similar affinity to intact and damaged DNA. Stimulates the N-glycosylase activity of the base excision protein OGG1. Enhances the uracil excision activity of UNG1. Also stimulates the cleavage of the phosphodiester backbone by APEX1. When located in the mitochondrion, reduces cellular ROS levels and mitochondrial DNA damage. Has also been shown to negatively regulate DNA repair in cells exposed to hydrogen peroxide. Plays a role in regulating transcription as part of the NF-kappa-B p65-p50 complex where it binds to the RELA/p65 subunit, enhances binding of the complex to DNA and promotes transcription of target genes. Represses its own translation by binding to its cognate mRNA. Binds to and protects TP53/p53 from MDM2-mediated ubiquitination. Involved in spindle formation and chromosome movement during mitosis by regulating microtubule polymerization. Involved in induction of apoptosis through its role in activation of CASP8. Induces neuronal apoptosis by interacting with the E2F1 transcription factor and acting synergistically with it to up-regulate pro-apoptotic proteins BCL2L11/BIM and HRK/Dp5. Interacts with TRADD following exposure to UV radiation and induces apoptosis by caspase-dependent JNK activation. The chain is Small ribosomal subunit protein uS3 (RPS3) from Oryctolagus cuniculus (Rabbit).